The primary structure comprises 596 residues: Probable translation initiation factor IF-2 (596 aa).

A tr-type G domain is found at 3–220; that stretch reads IRSPIVSVLG…MLLGLAQEYL (218 aa). Residues 12 to 19 form a G1 region; the sequence is GHVDHGKT. Position 12–19 (12–19) interacts with GTP; it reads GHVDHGKT. Positions 37 to 41 are G2; sequence GITQH. Residues 76-79 are G3; sequence DTPG. GTP-binding positions include 76-80 and 130-133; these read DTPGH and NKID. The tract at residues 130–133 is G4; it reads NKID. The G5 stretch occupies residues 198-200; the sequence is SAK.

The protein belongs to the TRAFAC class translation factor GTPase superfamily. Classic translation factor GTPase family. IF-2 subfamily.

Functionally, function in general translation initiation by promoting the binding of the formylmethionine-tRNA to ribosomes. Seems to function along with eIF-2. The chain is Probable translation initiation factor IF-2 from Methanobrevibacter smithii (strain ATCC 35061 / DSM 861 / OCM 144 / PS).